The chain runs to 249 residues: Olfactory receptor 1571 (249 aa).

A helical transmembrane segment spans residues 1 to 9 (LLMCNLCFA). Residues 10-40 (DICFTSASIPTNLVNIQTKNKVITYEGCISQ) are Extracellular-facing. The cysteines at positions 37 and 119 are disulfide-linked. The helical transmembrane segment at 41–60 (VYFFILFGVLDNFLLAVMAY) threads the bilayer. Over 61–82 (DRYVAICHPLHYTVIMNRRLCG) the chain is Cytoplasmic. Residues 83-103 (LLVLGSWVTTALNSLLQSSMA) form a helical membrane-spanning segment. At 104 to 136 (LRLSFCTDLKIPHFVCELNQLVLLACNDTFPND) the chain is on the extracellular side. The N-linked (GlcNAc...) asparagine glycan is linked to asparagine 130. The helical transmembrane segment at 137 to 158 (MVMYFAAVLLGGGPLAGILYSY) threads the bilayer. At 159 to 180 (SKIVSSIRAISSSQGKYKAFST) the chain is on the cytoplasmic side. A helical transmembrane segment spans residues 181 to 200 (CASHLSVVSLFYSTLLGVYL). At 201–210 (SSSFTQNSHS) the chain is on the extracellular side. A helical transmembrane segment spans residues 211 to 232 (TARASVMYSVVTPMLNPFIYSL). The Cytoplasmic segment spans residues 233–249 (RNKDLMGALRRLFRRKP).

The protein belongs to the G-protein coupled receptor 1 family. As to expression, tongue specific.

Its subcellular location is the cell membrane. In terms of biological role, possible taste receptor. The polypeptide is Olfactory receptor 1571 (Olr1571) (Rattus norvegicus (Rat)).